Reading from the N-terminus, the 328-residue chain is Methionyl-tRNA formyltransferase (328 aa).

Position 110–113 (110–113) interacts with (6S)-5,6,7,8-tetrahydrofolate; sequence SLLP.

It belongs to the Fmt family.

The catalysed reaction is L-methionyl-tRNA(fMet) + (6R)-10-formyltetrahydrofolate = N-formyl-L-methionyl-tRNA(fMet) + (6S)-5,6,7,8-tetrahydrofolate + H(+). Attaches a formyl group to the free amino group of methionyl-tRNA(fMet). The formyl group appears to play a dual role in the initiator identity of N-formylmethionyl-tRNA by promoting its recognition by IF2 and preventing the misappropriation of this tRNA by the elongation apparatus. This chain is Methionyl-tRNA formyltransferase, found in Prochlorococcus marinus (strain MIT 9515).